A 240-amino-acid chain; its full sequence is MAGPTIHRDMEKSSGYCEAPENLGLSFSIEAILKKPTERRSLPRPQSICKEDSRQTTIPGSKLERPPQDQPQEEKKNKRRVRTTFTTEQLQELEKLFHFTHYPDIHVRSQLASRINLPEARVQIWFQNQRAKWRKQEKSGNLSAPQQPGEAGLALPSNMDVSGPVLTPTAMTTLVPPTECCLLSQTQLPSSWFPTQIPLVPWHPWDLQPLPGPLTQHPCVPTFMFPPLHPKWGSICATST.

A disordered region spans residues 36 to 82 (PTERRSLPRPQSICKEDSRQTTIPGSKLERPPQDQPQEEKKNKRRVR). The segment covering 62–76 (KLERPPQDQPQEEKK) has biased composition (basic and acidic residues). A DNA-binding region (homeobox) is located at residues 78–137 (KRRVRTTFTTEQLQELEKLFHFTHYPDIHVRSQLASRINLPEARVQIWFQNQRAKWRKQE).

As to expression, expressed in intestinal epithelial cells from the duodenum to the proximal colon.

It localises to the nucleus. Its function is as follows. Transcription factor that regulates gene expression in intestine. May participate in vitamin A metabolism most likely by regulating BCO1 expression in the intestine. This Mus musculus (Mouse) protein is Intestine-specific homeobox (Isx).